A 247-amino-acid polypeptide reads, in one-letter code: ATP synthase subunit a, chloroplastic (247 aa).

A run of 5 helical transmembrane segments spans residues 38–58 (QVLI…IIAV), 95–115 (VPFI…GALL), 134–154 (INTT…AGLS), 199–219 (LVVV…VMFL), and 220–240 (GLFT…AYIG).

Belongs to the ATPase A chain family. As to quaternary structure, F-type ATPases have 2 components, CF(1) - the catalytic core - and CF(0) - the membrane proton channel. CF(1) has five subunits: alpha(3), beta(3), gamma(1), delta(1), epsilon(1). CF(0) has four main subunits: a, b, b' and c.

Its subcellular location is the plastid. The protein localises to the chloroplast thylakoid membrane. Its function is as follows. Key component of the proton channel; it plays a direct role in the translocation of protons across the membrane. The polypeptide is ATP synthase subunit a, chloroplastic (Oryza sativa subsp. indica (Rice)).